A 155-amino-acid polypeptide reads, in one-letter code: Ribonuclease H (155 aa).

An RNase H type-1 domain is found at 9-150 (DGQQVEMWTD…ADALANQGME (142 aa)). Residues Asp18, Glu56, Asp78, and Asp142 each coordinate Mg(2+).

This sequence belongs to the RNase H family. Monomer. The cofactor is Mg(2+).

The protein localises to the cytoplasm. The enzyme catalyses Endonucleolytic cleavage to 5'-phosphomonoester.. Its function is as follows. Endonuclease that specifically degrades the RNA of RNA-DNA hybrids. The protein is Ribonuclease H of Bordetella pertussis (strain Tohama I / ATCC BAA-589 / NCTC 13251).